Here is a 719-residue protein sequence, read N- to C-terminus: Potassium channel KOR2 (719 aa).

Residues Met1 to Arg63 are Cytoplasmic-facing. The chain crosses the membrane as a helical span at residues Ile64–Phe84. The Extracellular segment spans residues Ser85–Gln93. The helical transmembrane segment at Leu94–Leu114 threads the bilayer. Residues Ala115–Lys137 lie on the Cytoplasmic side of the membrane. Residues Gly138–Gly158 form a helical membrane-spanning segment. The Extracellular segment spans residues Arg159–Arg164. The helical; Voltage-sensor transmembrane segment at Trp165–Glu185 threads the bilayer. Residues Lys186 to Lys199 are Cytoplasmic-facing. A helical transmembrane segment spans residues Leu200–Thr220. Topologically, residues Thr221–Val255 are extracellular. The segment at residues Thr256 to Ala275 is an intramembrane region (pore-forming). Residues Val276–Val285 lie on the Extracellular side of the membrane. A helical membrane pass occupies residues Val286–Ile306. At Val307–Asn719 the chain is on the cytoplasmic side. Leu383–Gly503 serves as a coordination point for a nucleoside 3',5'-cyclic phosphate. 5 ANK repeats span residues Lys523 to Lys556, Asp560 to Ser589, Phe593 to Leu622, Asp624 to Cys653, and Asp657 to Ala686.

It belongs to the potassium channel family. Plant (TC 1.A.1.4) subfamily.

It is found in the membrane. In terms of biological role, probable outward-rectifying potassium channel. In Oryza sativa subsp. japonica (Rice), this protein is Potassium channel KOR2.